The following is a 104-amino-acid chain: Type VII secretion system extracellular protein B (104 aa).

It belongs to the WXG100 family. In terms of assembly, homodimer. When mixed with EsxA does not form heterodimers.

It localises to the secreted. In terms of biological role, virulence factor that is important for the establishment of infection in the host. EsxB is required for EsxA synthesis as well as secretion. Mediates together with EsxA the release of S.aureus from the host cell. Also inhibits host cytokine production and thus modulates dendritic cell-mediated immunity. In Staphylococcus aureus (strain Mu50 / ATCC 700699), this protein is Type VII secretion system extracellular protein B.